A 541-amino-acid chain; its full sequence is Pheromone B beta 1 receptor (541 aa).

Residues 1–3 (MHP) are Extracellular-facing. The chain crosses the membrane as a helical span at residues 4–24 (EFAPVAFLSAASLALPLPWHW). Residues 25–33 (RAGNVATLS) lie on the Cytoplasmic side of the membrane. Residues 34–54 (IIAWLFIMNMIYGINAVIWAG) traverse the membrane as a helical segment. Over 55–69 (SARITAVVYCDITTK) the chain is Extracellular. A helical transmembrane segment spans residues 70 to 90 (LTIGGNFALPAACLCLCIHLE). Over 91–109 (RVASVRAAQTTAADKRRRT) the chain is Cytoplasmic. Residues 110-130 (IFELAMCWLLPIIFMALHYVV) form a helical membrane-spanning segment. The Extracellular segment spans residues 131–150 (QGHRFDIVEDFGCRPATYYS). A helical membrane pass occupies residues 151–171 (IPAIFIVWVPPLTMAAASLVY). The Cytoplasmic segment spans residues 172-205 (ASLAIRHFMHRRLSFAMHLQARSSALTTSRYLRL). Residues 206–226 (ILMAIVQLVWLVVTTAYTLWF) form a helical membrane-spanning segment. The Extracellular segment spans residues 227-264 (SSMTLNLRPWTTWADVHSNFGRIQTWPAIITPAVILRG). The helical transmembrane segment at 265–285 (ACTLWWMVPASTWIFVAFFAF) threads the bilayer. Topologically, residues 286–541 (GNDAVEEYKR…IASVFPGGRR (256 aa)) are cytoplasmic. Disordered regions lie at residues 364–393 (TTSTVVSSMPPPYSLPPPPPPQKYTSPLDS) and 414–541 (YTIE…GGRR). A compositionally biased stretch (pro residues) spans 372-385 (MPPPYSLPPPPPPQ). Residues 420–429 (PETPSTSSST) are compositionally biased toward low complexity. Composition is skewed to pro residues over residues 467 to 478 (IPAPPSLPPPTH) and 493 to 502 (SRPPAFPPYP).

This sequence belongs to the G-protein coupled receptor 4 family.

Its subcellular location is the membrane. Receptor for the BBP1 pheromone, a prenylated mating factor. This is Pheromone B beta 1 receptor (BBR1) from Schizophyllum commune (Split gill fungus).